The following is a 180-amino-acid chain: Large ribosomal subunit protein uL5 (180 aa).

This sequence belongs to the universal ribosomal protein uL5 family. In terms of assembly, part of the 50S ribosomal subunit; part of the 5S rRNA/L5/L18/L25 subcomplex. Contacts the 5S rRNA and the P site tRNA. Forms a bridge to the 30S subunit in the 70S ribosome.

In terms of biological role, this is one of the proteins that bind and probably mediate the attachment of the 5S RNA into the large ribosomal subunit, where it forms part of the central protuberance. In the 70S ribosome it contacts protein S13 of the 30S subunit (bridge B1b), connecting the 2 subunits; this bridge is implicated in subunit movement. Contacts the P site tRNA; the 5S rRNA and some of its associated proteins might help stabilize positioning of ribosome-bound tRNAs. The polypeptide is Large ribosomal subunit protein uL5 (Ligilactobacillus salivarius (strain UCC118) (Lactobacillus salivarius)).